A 210-amino-acid chain; its full sequence is ATP-dependent dethiobiotin synthetase BioD (210 aa).

An ATP-binding site is contributed by 12-17 (NVGKTH). T16 serves as a coordination point for Mg(2+). K37 is a catalytic residue. Substrate is bound at residue T41. Residue E114 participates in Mg(2+) binding. Residue 114 to 117 (EGAG) coordinates ATP.

The protein belongs to the dethiobiotin synthetase family. As to quaternary structure, homodimer. Mg(2+) serves as cofactor.

The protein localises to the cytoplasm. The enzyme catalyses (7R,8S)-7,8-diammoniononanoate + CO2 + ATP = (4R,5S)-dethiobiotin + ADP + phosphate + 3 H(+). Its pathway is cofactor biosynthesis; biotin biosynthesis; biotin from 7,8-diaminononanoate: step 1/2. Functionally, catalyzes a mechanistically unusual reaction, the ATP-dependent insertion of CO2 between the N7 and N8 nitrogen atoms of 7,8-diaminopelargonic acid (DAPA, also called 7,8-diammoniononanoate) to form a ureido ring. This is ATP-dependent dethiobiotin synthetase BioD from Sulfurovum sp. (strain NBC37-1).